The following is a 148-amino-acid chain: F-box protein At3g55900 (148 aa).

The 51-residue stretch at 9–59 (CRNLSELPQELLYKILGLLPTRNVVSTSLISHQRRSQFHWMERLKFRYPRL) folds into the F-box domain.

The chain is F-box protein At3g55900 from Arabidopsis thaliana (Mouse-ear cress).